A 474-amino-acid chain; its full sequence is UDP-N-acetylmuramoyl-L-alanyl-D-glutamate--2,6-diaminopimelate ligase (474 aa).

Residue S21 coordinates UDP-N-acetyl-alpha-D-muramoyl-L-alanyl-D-glutamate. 93 to 99 (GTNGKSS) lines the ATP pocket. UDP-N-acetyl-alpha-D-muramoyl-L-alanyl-D-glutamate-binding positions include 139–140 (TT), S166, Q172, and R174. N6-carboxylysine is present on K206. Meso-2,6-diaminopimelate contacts are provided by residues R367, 391–394 (DNPR), G441, and E445. The Meso-diaminopimelate recognition motif signature appears at 391–394 (DNPR).

The protein belongs to the MurCDEF family. MurE subfamily. Requires Mg(2+) as cofactor. Post-translationally, carboxylation is probably crucial for Mg(2+) binding and, consequently, for the gamma-phosphate positioning of ATP.

It is found in the cytoplasm. The enzyme catalyses UDP-N-acetyl-alpha-D-muramoyl-L-alanyl-D-glutamate + meso-2,6-diaminopimelate + ATP = UDP-N-acetyl-alpha-D-muramoyl-L-alanyl-gamma-D-glutamyl-meso-2,6-diaminopimelate + ADP + phosphate + H(+). It participates in cell wall biogenesis; peptidoglycan biosynthesis. Catalyzes the addition of meso-diaminopimelic acid to the nucleotide precursor UDP-N-acetylmuramoyl-L-alanyl-D-glutamate (UMAG) in the biosynthesis of bacterial cell-wall peptidoglycan. This Rickettsia bellii (strain RML369-C) protein is UDP-N-acetylmuramoyl-L-alanyl-D-glutamate--2,6-diaminopimelate ligase.